A 231-amino-acid polypeptide reads, in one-letter code: Probable calcium-binding protein CML21 (231 aa).

4 consecutive EF-hand domains span residues 54–89 (DGLR…LEIS), 90–125 (FDEE…VYLL), 145–180 (PTFE…SGER), and 181–216 (SSGR…WVGI). 5 residues coordinate Ca(2+): D67, D69, N71, S73, and E78. Residues D158, N160, D162, Y164, E169, D194, D196, N198, M200, and E205 each contribute to the Ca(2+) site.

Its function is as follows. Potential calcium sensor. This Arabidopsis thaliana (Mouse-ear cress) protein is Probable calcium-binding protein CML21 (CML21).